We begin with the raw amino-acid sequence, 199 residues long: NADH-quinone oxidoreductase subunit B 2 (199 aa).

Residues C78, C79, C143, and C173 each coordinate [4Fe-4S] cluster.

This sequence belongs to the complex I 20 kDa subunit family. In terms of assembly, NDH-1 is composed of 14 different subunits. Subunits NuoB, C, D, E, F, and G constitute the peripheral sector of the complex. The cofactor is [4Fe-4S] cluster.

The protein localises to the cell inner membrane. It catalyses the reaction a quinone + NADH + 5 H(+)(in) = a quinol + NAD(+) + 4 H(+)(out). Functionally, NDH-1 shuttles electrons from NADH, via FMN and iron-sulfur (Fe-S) centers, to quinones in the respiratory chain. The immediate electron acceptor for the enzyme in this species is believed to be ubiquinone. Couples the redox reaction to proton translocation (for every two electrons transferred, four hydrogen ions are translocated across the cytoplasmic membrane), and thus conserves the redox energy in a proton gradient. The sequence is that of NADH-quinone oxidoreductase subunit B 2 from Rhodopseudomonas palustris (strain BisB5).